The following is a 695-amino-acid chain: Putative ATP-dependent RNA helicase L540 (695 aa).

Residues 53-219 (LSALENYQLV…FNSVDSTVID (167 aa)) form the Helicase ATP-binding domain. 66–73 (SSTGSGKS) contacts ATP. A DEAH box motif is present at residues 164 to 167 (DEAH). Residues 247–434 (LIEDLIHQQI…GINMMNQLMD (188 aa)) form the Helicase C-terminal domain.

It belongs to the DEAD box helicase family. DEAH subfamily.

It is found in the virion. The enzyme catalyses ATP + H2O = ADP + phosphate + H(+). The sequence is that of Putative ATP-dependent RNA helicase L540 from Acanthamoeba polyphaga (Amoeba).